We begin with the raw amino-acid sequence, 811 residues long: Metal transporter cnnm-1 (811 aa).

An N-terminal signal peptide occupies residues 1–24 (MSASCLRLLTLSLFILGQCNVTAA). Residues N20, N49, N61, and N122 are each glycosylated (N-linked (GlcNAc...) asparagine). The Extracellular portion of the chain corresponds to 25-204 (QNGVDDEVTT…KEYFLPLPLQ (180 aa)). The CNNM transmembrane domain occupies 197-376 (YFLPLPLQIA…TDNGQVSNEL (180 aa)). The helical transmembrane segment at 205 to 225 (IACIGFLLCLSALFSGLTLGL) threads the bilayer. Residues 226-259 (MSLTPQELELVIKSGAIKEQKCAAKILPVRKKGN) are Cytoplasmic-facing. The chain crosses the membrane as a helical span at residues 260-280 (LLLCSLLLGNVIVNSAISILM). The Extracellular portion of the chain corresponds to 281–284 (GELT). Residues 285 to 305 (TGIYALIGSTMGIVIFGEILP) traverse the membrane as a helical segment. Topologically, residues 306–315 (QSICVKKGLE) are cytoplasmic. Residues 316 to 336 (VGAHTISITQLFIFLTFPIAW) traverse the membrane as a helical segment. Residues 337 to 811 (PVSKLLDCLL…EEEMALLDQP (475 aa)) are Extracellular-facing. CBS domains are found at residues 394–456 (MTKI…NFTV) and 462–530 (YHKH…INDE). N-linked (GlcNAc...) asparagine glycans are attached at residues N435 and N453. A disordered region spans residues 741 to 760 (DVSHNSSAHNSNLSLVEKPG). The span at 743–755 (SHNSSAHNSNLSL) shows a compositional bias: low complexity. N-linked (GlcNAc...) asparagine glycosylation is found at N745 and N752.

It belongs to the ACDP family. As to expression, highly expressed in the intestine and in neurons, but it is also expressed in a variety of tissues including the pharynx, hypodermis, rectum and in muscles.

The protein localises to the basolateral cell membrane. In terms of biological role, probable metal transporter. Probably acts redundantly with the other metal transport proteins cnnm-2, cnnm-3, cnnm-4 and cnnm-5 to regulate Mg(2+) homeostasis. Promotes postembryonic gonad development by regulating Mg(2+) levels, probably via AMPK signaling. The sequence is that of Metal transporter cnnm-1 from Caenorhabditis elegans.